Consider the following 235-residue polypeptide: uncharacterized protein (235 aa).

The S4 RNA-binding domain maps to 2 to 69 (CRLAKIISNA…KPRLWIYYKP (68 aa)). The active-site Nucleophile is the Asp-102.

Belongs to the pseudouridine synthase RsuA family.

The enzyme catalyses a uridine in RNA = a pseudouridine in RNA. This is an uncharacterized protein from Rickettsia prowazekii (strain Madrid E).